The sequence spans 398 residues: Na(+)/H(+) antiporter NhaA (398 aa).

A run of 11 helical transmembrane segments spans residues 14–34, 60–80, 96–116, 125–145, 155–175, 179–199, 214–234, 263–283, 292–312, 330–350, and 362–382; these read AAGV…NWSV, LLLW…GLEV, MLPL…FLLF, VGWA…LTLL, VFLL…IALF, QIFW…AYLN, IVLW…GVIV, FLII…GIVL, LGIA…LSWL, IVAV…ITLL, and YAKL…YLAL.

This sequence belongs to the NhaA Na(+)/H(+) (TC 2.A.33) antiporter family.

Its subcellular location is the cell inner membrane. It catalyses the reaction Na(+)(in) + 2 H(+)(out) = Na(+)(out) + 2 H(+)(in). Functionally, na(+)/H(+) antiporter that extrudes sodium in exchange for external protons. The protein is Na(+)/H(+) antiporter NhaA of Pectobacterium carotovorum subsp. carotovorum (strain PC1).